The following is a 143-amino-acid chain: uncharacterized protein (143 aa).

An HTH marR-type domain is found at Asp5–Glu137. The H-T-H motif DNA-binding region spans Pro51 to Asp74.

As to quaternary structure, homodimer.

This is an uncharacterized protein from Mycobacterium leprae (strain TN).